The chain runs to 224 residues: MSYIDYLAYTGNTTFYDRFDGDLTSEHRIKCIINGCLINIMFSIRTIKEFPEEIKICQAAVSKFLTCGYVNDYLIEKYPPFYLWHKRFCDYDIYKMLMEKHPKLNYTVAKAAIMQRYNDLYFSFDFQPEEELIMTAALTENTEIYEDQINKAKKLGYCYSYLDYDNYCIKEEPGIEEIPDIEPKFNPFYVYVESGSKMEDVEYAVVNLVEEFKYLQMVYDMSKI.

Functionally, the presence of the two linear plasmids, termed pGKL1 and pGKL2, in strains of Kluyveromyces lactis confers the killer phenotype to the host cell, by promoting the secretion of a toxin able to inhibit the growth of sensitive strains. This is an uncharacterized protein from Kluyveromyces lactis (strain ATCC 8585 / CBS 2359 / DSM 70799 / NBRC 1267 / NRRL Y-1140 / WM37) (Yeast).